The primary structure comprises 726 residues: MAR-binding filament-like protein 1 (726 aa).

A chloroplast-targeting transit peptide spans 1 to 41 (MGFLIGGSCFVPSVPLHSRFLSSPSSSSSSSPSSSQFGLLC). A thylakoid-targeting transit peptide spans 42 to 95 (SSNVAKFKRRRPTLASLNQEDGYEYDVASAKRRAFLLVGISVLPFLQLRSPALA). Over 96 to 124 (DERGNEIKTSKVDLETEVAVVSEGTSPNP) the chain is Lumenal, thylakoid. The chain crosses the membrane as a helical span at residues 125–145 (FLALLNGLGIFSAGVLGALYA). A coiled-coil region spans residues 144-691 (YALARQDTKA…KGEILRMRSQ (548 aa)). Residues 146–726 (LARQDTKAAE…VRRRKSSTSS (581 aa)) are Stromal-facing. A disordered region spans residues 678–726 (LGSAKGEILRMRSQPDSVKAVNSTDNKEKSDNTVTVKKVVRRRKSSTSS). Residues 691–701 (QPDSVKAVNST) are compositionally biased toward polar residues. Positions 715-722 (KVVRRRKS) match the Nuclear localization signal motif. Over residues 715–726 (KVVRRRKSSTSS) the composition is skewed to basic residues.

As to quaternary structure, interacts with PTST2; the interaction is essential for the initiation of starch granules biosynthesis in leaf chloroplasts, for the correct location of the process in the stromal spaces between the thylakoid membranes, and for the association of PTST2 with the thylakoid membranes. In terms of processing, predicted to be translocated into the thylakoid by the Tat system. The position of the transit peptide cleavages have not been experimentally proven.

The protein localises to the plastid. It is found in the chloroplast. The protein resides in the chloroplast thylakoid membrane. It localises to the chloroplast stroma. Its subcellular location is the chloroplast nucleoid. The protein localises to the nucleus. It is found in the nucleus matrix. DNA-binding protein required for the initiation of starch granules biosynthesis in leaf chloroplasts. Anchored to the thylakoid membranes with its C-terminus facing into the stroma where it is essential for localizing PTST2 and SS4 to the stromal spaces between the thylakoid membranes in order to begin starch granule formation. Associated with leaf chloroplastic nucleoids in vivo. Binds to various chloroplastic double-stranded DNA fragments without particular sequence specificity in vitro. May function at the interface between nucleoids and thylakoids possibly by anchoring nucleoids to the thylakoid membrane system in mature chloroplasts. Likely to participate in nuclear architecture by connecting chromatin with the nuclear matrix and potentially with the nuclear envelope. This chain is MAR-binding filament-like protein 1, found in Arabidopsis thaliana (Mouse-ear cress).